Consider the following 46-residue polypeptide: Viscotoxin-1-PS (46 aa).

3 disulfide bridges follow: C3–C40, C4–C32, and C16–C26.

Belongs to the plant thionin (TC 1.C.44) family.

The protein resides in the secreted. Its function is as follows. Thionins are small plant proteins which are toxic to animal cells. They seem to exert their toxic effect at the level of the cell membrane. Their precise function is not known. In Viscum album (European mistletoe), this protein is Viscotoxin-1-PS (THI2.4).